Here is a 233-residue protein sequence, read N- to C-terminus: Biosynthetic peptidoglycan transglycosylase (233 aa).

The helical transmembrane segment at 17–37 (IVLAVLALVILPYALIFFYVL) threads the bilayer.

The protein belongs to the glycosyltransferase 51 family.

The protein localises to the cell inner membrane. The enzyme catalyses [GlcNAc-(1-&gt;4)-Mur2Ac(oyl-L-Ala-gamma-D-Glu-L-Lys-D-Ala-D-Ala)](n)-di-trans,octa-cis-undecaprenyl diphosphate + beta-D-GlcNAc-(1-&gt;4)-Mur2Ac(oyl-L-Ala-gamma-D-Glu-L-Lys-D-Ala-D-Ala)-di-trans,octa-cis-undecaprenyl diphosphate = [GlcNAc-(1-&gt;4)-Mur2Ac(oyl-L-Ala-gamma-D-Glu-L-Lys-D-Ala-D-Ala)](n+1)-di-trans,octa-cis-undecaprenyl diphosphate + di-trans,octa-cis-undecaprenyl diphosphate + H(+). Its pathway is cell wall biogenesis; peptidoglycan biosynthesis. Its function is as follows. Peptidoglycan polymerase that catalyzes glycan chain elongation from lipid-linked precursors. The polypeptide is Biosynthetic peptidoglycan transglycosylase (Rhizobium leguminosarum bv. trifolii (strain WSM2304)).